A 71-amino-acid polypeptide reads, in one-letter code: Dermaseptin-PT9 (71 aa).

The first 22 residues, 1-22 (MAFLKKSLFLVLFLGLVSLSIC), serve as a signal peptide directing secretion. A propeptide spanning residues 23–43 (EEEKRENEMEQEDDEQSEMKR) is cleaved from the precursor. Val68 carries the post-translational modification Valine amide. Residues 69 to 71 (GEQ) constitute a propeptide that is removed on maturation.

Belongs to the frog skin active peptide (FSAP) family. Dermaseptin subfamily. Expressed by the skin glands.

The protein resides in the secreted. The protein localises to the target cell membrane. Functionally, antimicrobial peptide with activity against fungi, Gram-positive and Gram-negative bacteria. Is active against S.aureus (MIC=16 uM), MRSA (MIC=32 uM), E.faecalis (MIC=16 uM), E.coli (MIC=8 uM), P.aeruginosa (MIC=16 uM), K.pneumoniae (MIC=8 uM), and C.albicans (MIC=64 uM). Also inhibits biofilm formation. Acts by disrupting cell membranes. Also exhibits anti-proliferative effect against various human cancer cells. Shows weak hemolytic activity towards horse erythrocytes. This is Dermaseptin-PT9 from Phyllomedusa tarsius (Brownbelly leaf frog).